Consider the following 582-residue polypeptide: MRNAQKPSGMPVHRYLPFHEQIEVELPDRTWPTKRITTAPRWCAVDLRDGNQALIDPMSPARKLKMFELLVKMGYKEIEVGFPSASQTDFDFVRQLIQGGHIPEDVTIQVLTQAREHLIERTYESLVGAKQAIVHLYNSTSVLQRRVVFNEDQDGIMALATQGALLCKKYQETLTDTKITYEYSPESFTGTELDYAVRVCNAVADIFEASADNQVIVNLPATVEMITPNVYADSIEWMSHNLHPREGIILSLHPHNDRGTGVAAAELGYLAGADRIEGCLFGNGERAGNVDLVTLGLNMFSQGVDPMIDFSDIDEIRRTVEYCNQLPAPERMPYGGDLVFTAFSGSHQDAIKKGFEALERDADAAGIAVADTVWAVPYLPVDPKDLGRSYEAVIRVNSQSGKGGVAYLLKSEHSLDLPRRAQIEFSGVIQRRTDSVGGEVSADQRWEAFTDEYLPSPAGHPGGQWGRYALGSMNADTEEDGTTKLNTAMRIDGVEQRRSGSGNGPIAALLNILHDDGVDVRVLDYSEHALSEGGNASAASYVECAVGDRVLWGLGIDPNTTVSSLKAVISAVNRAIRDNQVD.

The Pyruvate carboxyltransferase domain maps to 40–314 (PRWCAVDLRD…DPMIDFSDID (275 aa)). Residues Asp-49, His-253, His-255, and Asn-289 each coordinate Mg(2+). The tract at residues 456–582 (SPAGHPGGQW…NRAIRDNQVD (127 aa)) is regulatory domain.

Belongs to the alpha-IPM synthase/homocitrate synthase family. LeuA type 2 subfamily. As to quaternary structure, homodimer. Mg(2+) is required as a cofactor.

It is found in the cytoplasm. The catalysed reaction is 3-methyl-2-oxobutanoate + acetyl-CoA + H2O = (2S)-2-isopropylmalate + CoA + H(+). It functions in the pathway amino-acid biosynthesis; L-leucine biosynthesis; L-leucine from 3-methyl-2-oxobutanoate: step 1/4. Catalyzes the condensation of the acetyl group of acetyl-CoA with 3-methyl-2-oxobutanoate (2-ketoisovalerate) to form 3-carboxy-3-hydroxy-4-methylpentanoate (2-isopropylmalate). The chain is 2-isopropylmalate synthase from Renibacterium salmoninarum (strain ATCC 33209 / DSM 20767 / JCM 11484 / NBRC 15589 / NCIMB 2235).